Reading from the N-terminus, the 225-residue chain is Recoverin family protein DDB_G0274781 (225 aa).

The span at 1–13 (MGNKQGKSPNNSK) shows a compositional bias: low complexity. Residues 1–20 (MGNKQGKSPNNSKGGKKYKI) are disordered. Gly2 is lipidated: N-myristoyl glycine. 3 EF-hand domains span residues 78–113 (DNSP…LCKG), 114–149 (TAEE…AWIS), and 174–209 (MAQI…HPKI). Asp91, Asn93, Asp95, Thr97, Glu102, Asp127, Asp129, Asn131, Tyr133, Glu138, Asp187, Asn189, Asp191, Lys193, and Glu198 together coordinate Ca(2+).

This sequence belongs to the recoverin family.

This is Recoverin family protein DDB_G0274781 from Dictyostelium discoideum (Social amoeba).